We begin with the raw amino-acid sequence, 471 residues long: ATP synthase subunit beta (471 aa).

154–161 (GGAGVGKT) contributes to the ATP binding site.

It belongs to the ATPase alpha/beta chains family. F-type ATPases have 2 components, CF(1) - the catalytic core - and CF(0) - the membrane proton channel. CF(1) has five subunits: alpha(3), beta(3), gamma(1), delta(1), epsilon(1). CF(0) has three main subunits: a(1), b(2) and c(9-12). The alpha and beta chains form an alternating ring which encloses part of the gamma chain. CF(1) is attached to CF(0) by a central stalk formed by the gamma and epsilon chains, while a peripheral stalk is formed by the delta and b chains.

Its subcellular location is the cell membrane. It carries out the reaction ATP + H2O + 4 H(+)(in) = ADP + phosphate + 5 H(+)(out). Produces ATP from ADP in the presence of a proton gradient across the membrane. The catalytic sites are hosted primarily by the beta subunits. In Mesomycoplasma hyopneumoniae (strain 232) (Mycoplasma hyopneumoniae), this protein is ATP synthase subunit beta.